A 1085-amino-acid chain; its full sequence is MADEELVKKMVRAVLQSSKSGLSLSDLQVEYKDLTGELIPYKQLGYVTLDALLHSMPSIVKLDKGQSGEVMCHATTGNEMAHITKLAARQRTAKKTGRPQVVNCQMRVKPAAPLVLNAKPRTSLRQPDHRGRLGRGGGRGHGDTRTGCMRDPQLDGKGGRPHNTPPNTPSRKPSLPSERPEKRMTLPSRFQKEVHAHILRNPQHINVPSNLNENTTPPKPRLPHSAPYSPKLVQSRLQEVLNKHSNGLWVSKLPQLYREHYKQDLPSEALKELENWTHICTVEKPCSSKPQELLLYPAKETSQITPTPTHDRSPSHHKKPQTQRPSLTAKSNTPESPKALSPDLKQKLGELLLKYSSGLWAHALPKLYQDTYKCKLPEFVLDQLTLLSDICTIDYPVPDNPKRAILYAKVVEDENRNQSGLAGQEMKLERRLSSQTVPPLVIPRVEYPSVLVVDASDTNCVILRYIGEGYSKAQEKLEDEMREFYRQDNTKMALRSPSPGQLTAVGAEEEDDIIRAQVCEVMADKVKVYYVDHGFSEVISIRKLFELNEKFYRLPFQATKCKLAGLESFSQEQAVLKKLESIATGKILLAEILEREDMPLVVLYDTSQDDDVNINAACMKALQDRSLESPLKVNSAYMNVSVTSVCSDGTIYCQVPSRGLTKLNEILEKTENYFHSQVTSESLVSRPFCGKNCLARYKGKWSRVEITNLHGSRVLDILFVDVGVQASVEVIELREIPPPLLRDLISTPAQALKCCLAGLPVSVGLWTPDAVQWLRDTVLHISDCSLKIAKVDETKRLAHVYLFTSKNFHDTSCSLNQQLADSDLWNHQKDVFLSSRGPLKSLNVPTATQTSSLKTDRGDKALHTPKKTSPPLGSKSTPAGSPPERLSLPPALELPEIGQNMDVFVSVACHPGHFVLQPWQDMYKLVVLMGEMILHYNKMEEKALKVEKNQVCAAKVENNWYRVLVKGVLTNGLVSVFQLDYGKHELVSGTKLRPLTQEFCQLPFQAITAQLAGLKPRQWSEEASIVFRNHVEKKPLVAQLESVQEASQPWERKVMIYLVDTSQEERDIWLHDIMAEFTDEMTKTA.

The 74-residue stretch at 3-76 (DEELVKKMVR…SGEVMCHATT (74 aa)) folds into the HTH OST-type 1 domain. Disordered stretches follow at residues 112-183 (APLV…PEKR), 200-228 (RNPQ…SAPY), and 297-341 (PAKE…KALS). Residues 203–216 (QHINVPSNLNENTT) are compositionally biased toward polar residues. The 71-residue stretch at 229–299 (SPKLVQSRLQ…PQELLLYPAK (71 aa)) folds into the HTH OST-type 2 domain. The segment covering 322 to 335 (TQRPSLTAKSNTPE) has biased composition (polar residues). Positions 340–410 (LSPDLKQKLG…PKRAILYAKV (71 aa)) constitute an HTH OST-type 3 domain. Tudor domains are found at residues 496–554 (SPSP…FYRL) and 686–743 (RPFC…LLRD). Polar residues predominate over residues 843 to 853 (NVPTATQTSSL). A disordered region spans residues 843 to 888 (NVPTATQTSSLKTDRGDKALHTPKKTSPPLGSKSTPAGSPPERLSL).

It localises to the cytoplasm. Functionally, component of specific cytoplasmic RNA granules involved in post-transcriptional regulation of specific genes: probably acts by binding to specific mRNAs and regulating their translation. Probably required during spermatogenesis. The chain is Tudor domain-containing protein 7B (tdrd7b) from Danio rerio (Zebrafish).